The sequence spans 727 residues: YTH domain-containing protein 1 (727 aa).

Over residues 1–12 (MAADSREEKDGE) the composition is skewed to basic and acidic residues. The tract at residues 1-338 (MAADSREEKD…KHEKLSSSVR (338 aa)) is disordered. Serine 35 bears the Phosphoserine mark. The segment covering 50 to 59 (DRMESTDTKR) has biased composition (basic and acidic residues). The segment covering 63-90 (SVHSRQLVSKPLSSSVSNNKRIVSTKGK) has biased composition (polar residues). Basic and acidic residues predominate over residues 91 to 115 (SATEYKNEEYQRSERNKRLDADRKI). Lysine 96 is covalently cross-linked (Glycyl lysine isopeptide (Lys-Gly) (interchain with G-Cter in SUMO2)). A phosphoserine mark is found at serine 118 and serine 120. A compositionally biased stretch (basic and acidic residues) spans 124-144 (EPYKNQPEKTCVRKRDPERRA). Position 146 is a phosphoserine (serine 146). Threonine 148 is subject to Phosphothreonine. Composition is skewed to basic and acidic residues over residues 151 to 163 (GSERIGLEVDRRA) and 170 to 185 (SKEEVNSEEYGSDHET). Over residues 199-254 (ENEEEGVEEDVEEDEEVEEDAEEDEEVDEDGEEEEEEEEEEEEEEEEEEEEYEQDE) the composition is skewed to acidic residues. Over residues 255–270 (RDQKEEGNDYDTRSEA) the composition is skewed to basic and acidic residues. A compositionally biased stretch (polar residues) spans 280–289 (FTDGSVRSGS). Serine 308, serine 315, serine 317, serine 318, and serine 320 each carry phosphoserine. A compositionally biased stretch (low complexity) spans 315 to 325 (SGSSASESYAG). Residues 355–492 (ARFFLIKSNN…ECGTQLCLLF (138 aa)) enclose the YTH domain. RNA is bound by residues 361 to 363 (KSN) and 377 to 378 (WS). Serine 424 carries the post-translational modification Phosphoserine. An RNA-binding site is contributed by tryptophan 428. At serine 435 the chain carries Phosphoserine. Aspartate 476 provides a ligand contact to RNA. Residues 508-523 (RHKRRMHSQPRSRGRP) are compositionally biased toward basic residues. Disordered regions lie at residues 508-564 (RHKR…PGYL), 607-643 (GMPPYPGMEQPPHHPYYQHHAPPPQAHPPYSGHHPVP), and 669-727 (AVVS…RYRR). A compositionally biased stretch (basic and acidic residues) spans 524–564 (SRREPVRDVGRRRPEDYDIHNSRKKPRIDYPPEFHQRPGYL). A Phosphoserine modification is found at serine 545. Over residues 679 to 727 (RERDRERERDRPRDNRRDRERDRGRDRERERERLCDRDRDRGERGRYRR) the composition is skewed to basic and acidic residues.

As to quaternary structure, interacts with SRSF1. Interacts with SRSF2. Interacts with SRSF3. Interacts with SRSF7. Interacts with SRSF10. Interacts with CPSF6. Interacts with KHDRBS1/SAM68. Interacts with TRA2B. Interacts with KHDRBS3. Interacts with EMD. Interacts with RBMX. Interacts with ZCCHC8. In terms of processing, tyrosine phosphorylated.

Its subcellular location is the nucleus. It localises to the nucleus speckle. Functionally, regulator of alternative splicing that specifically recognizes and binds N6-methyladenosine (m6A)-containing RNAs. M6A is a modification present at internal sites of mRNAs and some non-coding RNAs and plays a role in the efficiency of mRNA splicing, processing and stability. Acts as a key regulator of exon-inclusion or exon-skipping during alternative splicing via interaction with mRNA splicing factors SRSF3 and SRSF10. Specifically binds m6A-containing mRNAs and promotes recruitment of SRSF3 to its mRNA-binding elements adjacent to m6A sites, leading to exon-inclusion during alternative splicing. In contrast, interaction with SRSF3 prevents interaction with SRSF10, a splicing factor that promotes exon skipping: this prevents SRSF10 from binding to its mRNA-binding sites close to m6A-containing regions, leading to inhibit exon skipping during alternative splicing. May also regulate alternative splice site selection. Also involved in nuclear export of m6A-containing mRNAs via interaction with SRSF3: interaction with SRSF3 facilitates m6A-containing mRNA-binding to both SRSF3 and NXF1, promoting mRNA nuclear export. Involved in S-adenosyl-L-methionine homeostasis by regulating expression of MAT2A transcripts, probably by binding m6A-containing MAT2A mRNAs. Also recognizes and binds m6A on other RNA molecules. Involved in random X inactivation mediated by Xist RNA: recognizes and binds m6A-containing Xist and promotes transcription repression activity of Xist. Also recognizes and binds m6A-containing single-stranded DNA. Involved in germline development: required for spermatogonial development in males and oocyte growth and maturation in females, probably via its role in alternative splicing. The sequence is that of YTH domain-containing protein 1 from Homo sapiens (Human).